The chain runs to 465 residues: MLPSTIQTLTLFLTSGGVLLSLYVSASLSYLLYSDILLKFSPKITAPTMTLDCANASNVQAVNRSATKEMTFLLPEPEWTYPRLSCQGSTFQKALLISPHRFGEARGNSAPLIIREPFIACGPKECKHFALTHYAAQPGGYYNGTREDRNKLRHLISVKLGKIPTVENSIFHMAAWSGSACHDGREWTYIGVDGPDSNALIKIKYGEAYTDTYHSYANNILRTQESACNCIGGDCYLMITDGSASGISECRFLKIREGRIIKEIFPTGRVEHTEECTCGFASNKTIECACRDNNYTAKRPFVKLNVETDTAEIRLMCTETYLDTPRPDDGSITGPCESNGDKGRGGIKGGFVHQRMASKIGRWYSRTMSKTERMGMELYVKYDGDPWTDSDALAPSGVMVSIKEPGWYSFGFEIKDKKCDVPCIGIEMVHDGGKKTWHSAATAIYCLMGSGQLLWDTVTGVDMAL.

Over 1-11 (MLPSTIQTLTL) the chain is Intravirion. A helical transmembrane segment spans residues 12 to 34 (FLTSGGVLLSLYVSASLSYLLYS). The interval 13 to 35 (LTSGGVLLSLYVSASLSYLLYSD) is involved in apical transport and lipid raft association. The Virion surface segment spans residues 35–465 (DILLKFSPKI…DTVTGVDMAL (431 aa)). The tract at residues 38–85 (LKFSPKITAPTMTLDCANASNVQAVNRSATKEMTFLLPEPEWTYPRLS) is hypervariable stalk region. 2 N-linked (GlcNAc...) asparagine; by host glycosylation sites follow: Asn55 and Asn63. 8 disulfide bridges follow: Cys86–Cys419, Cys121–Cys126, Cys181–Cys228, Cys230–Cys235, Cys276–Cys290, Cys278–Cys288, Cys317–Cys336, and Cys423–Cys446. The segment at 88–465 (GSTFQKALLI…DTVTGVDMAL (378 aa)) is head of neuraminidase. Position 115 (Arg115) interacts with substrate. Asn143 carries N-linked (GlcNAc...) asparagine; by host glycosylation. Catalysis depends on Asp148, which acts as the Proton donor/acceptor. Residue Arg149 participates in substrate binding. 274 to 275 (EE) is a binding site for substrate. An N-linked (GlcNAc...) asparagine; by host glycan is attached at Asn283. Substrate is bound at residue Arg291. Ca(2+) is bound at residue Asp292. N-linked (GlcNAc...) asparagine; by host glycosylation is present at Asn294. Ca(2+) is bound at residue Asp323. Arg373 lines the substrate pocket. Catalysis depends on Tyr408, which acts as the Nucleophile.

This sequence belongs to the glycosyl hydrolase 34 family. In terms of assembly, homotetramer. Requires Ca(2+) as cofactor. N-glycosylated.

The protein resides in the virion membrane. The protein localises to the host apical cell membrane. The catalysed reaction is Hydrolysis of alpha-(2-&gt;3)-, alpha-(2-&gt;6)-, alpha-(2-&gt;8)- glycosidic linkages of terminal sialic acid residues in oligosaccharides, glycoproteins, glycolipids, colominic acid and synthetic substrates.. Inhibited by the neuraminidase inhibitors zanamivir (Relenza) and oseltamivir (Tamiflu). These drugs interfere with the release of progeny virus from infected cells and are effective against all influenza strains. Resistance to neuraminidase inhibitors is quite rare. In terms of biological role, catalyzes the removal of terminal sialic acid residues from viral and cellular glycoconjugates. Cleaves off the terminal sialic acids on the glycosylated HA during virus budding to facilitate virus release. Additionally helps virus spread through the circulation by further removing sialic acids from the cell surface. These cleavages prevent self-aggregation and ensure the efficient spread of the progeny virus from cell to cell. Otherwise, infection would be limited to one round of replication. Described as a receptor-destroying enzyme because it cleaves a terminal sialic acid from the cellular receptors. May facilitate viral invasion of the upper airways by cleaving the sialic acid moieties on the mucin of the airway epithelial cells. Likely to plays a role in the budding process through its association with lipid rafts during intracellular transport. May additionally display a raft-association independent effect on budding. Plays a role in the determination of host range restriction on replication and virulence. Sialidase activity in late endosome/lysosome traffic seems to enhance virus replication. This is Neuraminidase from Homo sapiens (Human).